A 76-amino-acid chain; its full sequence is Putative phosphotransferase enzyme IIA component YyzE (76 aa).

One can recognise a PTS EIIA type-1 domain in the interval 1-76 (MVTPTKHAIG…LHQKIFTVVS (76 aa)). The active-site Tele-phosphohistidine intermediate is His22.

The protein resides in the cytoplasm. Its function is as follows. The phosphoenolpyruvate-dependent sugar phosphotransferase system (PTS), a major carbohydrate active -transport system, catalyzes the phosphorylation of incoming sugar substrates concomitant with their translocation across the cell membrane. This Bacillus subtilis (strain 168) protein is Putative phosphotransferase enzyme IIA component YyzE (yyzE).